Reading from the N-terminus, the 517-residue chain is 2,3-bisphosphoglycerate-independent phosphoglycerate mutase 1 (517 aa).

2 residues coordinate Mn(2+): Asp17 and Ser67. The active-site Phosphoserine intermediate is the Ser67. Substrate contacts are provided by residues His128, 158-159 (RD), Arg190, Arg196, 267-270 (RPDR), and Lys340. Mn(2+)-binding residues include Asp407, His411, Asp448, His449, and His467.

This sequence belongs to the BPG-independent phosphoglycerate mutase family. It depends on Mn(2+) as a cofactor.

It carries out the reaction (2R)-2-phosphoglycerate = (2R)-3-phosphoglycerate. It participates in carbohydrate degradation; glycolysis; pyruvate from D-glyceraldehyde 3-phosphate: step 3/5. In terms of biological role, catalyzes the interconversion of 2-phosphoglycerate and 3-phosphoglycerate. This Methanosarcina barkeri (strain Fusaro / DSM 804) protein is 2,3-bisphosphoglycerate-independent phosphoglycerate mutase 1.